Here is a 238-residue protein sequence, read N- to C-terminus: IkB-like protein (238 aa).

4 ANK repeats span residues 48-80 (GSSVFMWICIYGRIDFLKFLFKQESYPGEIINH), 87-118 (GNSALHYLAEKKNHLILEEVLGYFGKNGTRIC), 124-153 (GMTPVMKAAMRGRTLNMLSLIKFGADPTQK), and 158-187 (GFTAWDWAVFTGNMELVKSLNHDYQKPLYM). A Nuclear localization signal motif is present at residues 80-86 (HHRRDND). A Nuclear localization signal motif is present at residues 202-213 (KKKPKIIITGCK). The PxIxITxC motif; Interaction with host PPP3CA signature appears at 205 to 212 (PKIIITGC). An FLCV motif motif is present at residues 227-230 (FLCV).

The protein belongs to the asfivirus A238L family. As to quaternary structure, interacts with host PPIA. Interacts with host PPP3CA/Calcineurin. Interacts with host RELA/p65; interaction of the 32 kDa form with host RELA results in the formation of a stable complex with NF-kappa-B. Interacts with host PPP3R1. Interacts with host EP300; this interaction inhibits the association of host EP300 with host RELA, JUN and NFATC2. In terms of processing, the protein exists in a 28 kDa and a 32 kDa form, probably due to post-translational modifications which are neither phosphorylation, nor sumoylation.

It localises to the host nucleus. It is found in the host cytoplasm. In terms of biological role, ikB-like protein that inhibits the binding of NF-kappa-B to DNA, thereby downregulating pro-inflammatory cytokine production. Forms a heterodimer with the NF-kappa-B subunit RELA/p65 and prevents the activation of the NF-kappa-B transcription factor. Inhibits calcineurin function, which is required for the induction of nuclear factor of activated T cells (NFAT)-dependent immune response genes. Prevents the binding of substrates to calcineurin without affecting the phosphatase activity. Does not contain the serine residues that are phosphorylated by host IkB kinase and thus is not degraded following stimulation of the NFkB pathway. This is IkB-like protein (A238L) from Ornithodoros (relapsing fever ticks).